Reading from the N-terminus, the 742-residue chain is Envelope glycoprotein H (742 aa).

An N-terminal signal peptide occupies residues 1-23; sequence MRPGLPSYLIILAVCLFSHLLSS. The Virion surface segment spans residues 24-719; it reads RYGAEAVSEP…VVDATDSRLL (696 aa). Asn55, Asn62, Asn67, and Asn192 each carry an N-linked (GlcNAc...) asparagine; by host glycan. Cys195 and Cys211 are joined by a disulfide. The segment at 217–280 is interaction with gL; the sequence is YLIDELRYVK…QTEKHELLVL (64 aa). Intrachain disulfides connect Cys330-Cys383, Cys495-Cys522, and Cys571-Cys624. Residues Asn641 and Asn700 are each glycosylated (N-linked (GlcNAc...) asparagine; by host). A helical membrane pass occupies residues 720–740; sequence MMSVYALSAIIGIYLLYRMLK. Topologically, residues 741–742 are intravirion; that stretch reads TC.

This sequence belongs to the herpesviridae glycoprotein H family. In terms of assembly, interacts with glycoprotein L (gL); this interaction is necessary for the correct processing and cell surface expression of gH. The heterodimer gH/gL seems to interact with gB trimers during fusion. Forms the envelope pentamer complex (PC) composed of gH, gL, UL128, UL130, and UL131A. The pentamer interacts with host NRP2. Forms the envelope trimer complex composed of gH, gL, and gO. The trimer interacts with host PDGFRA. The trimer also interacts with host EPHA2. The trimer also interacts with host TGFBR3. Interacts with UL116. N-glycosylated, O-glycosylated, and sialylated.

The protein resides in the virion membrane. It localises to the host cell membrane. The protein localises to the host endosome membrane. Functionally, the heterodimer glycoprotein H-glycoprotein L is required for the fusion of viral and plasma membranes leading to virus entry into the host cell. Following initial binding to host receptor, membrane fusion is mediated by the fusion machinery composed of gB and the heterodimer gH/gL. May also be involved in the fusion between the virion envelope and the outer nuclear membrane during virion morphogenesis. In human cytomegalovirus, forms two distincts complexes to mediate viral entry, a trimer and a pentamer at the surface of the virion envelope. The gH-gL-gO trimer is required for infection in fibroblasts by interacting with host PDGFRA, and in glioblastoma cells by interacting with host EPHA2. Thsi trimer may also be required in other cell types using host TGFBR3. The gH-gL-UL128-UL130-UL131A pentamer is essential for viral entry in epithelial, endothelial and myeloid cells via interaction with host NRP2. This is Envelope glycoprotein H from Human cytomegalovirus (strain Merlin) (HHV-5).